Consider the following 419-residue polypeptide: Serine hydroxymethyltransferase (419 aa).

(6S)-5,6,7,8-tetrahydrofolate contacts are provided by residues Leu121 and 125 to 127 (GHL). Lys229 carries the post-translational modification N6-(pyridoxal phosphate)lysine. A (6S)-5,6,7,8-tetrahydrofolate-binding site is contributed by 354-356 (SPF).

The protein belongs to the SHMT family. As to quaternary structure, homodimer. The cofactor is pyridoxal 5'-phosphate.

The protein resides in the cytoplasm. It carries out the reaction (6R)-5,10-methylene-5,6,7,8-tetrahydrofolate + glycine + H2O = (6S)-5,6,7,8-tetrahydrofolate + L-serine. It functions in the pathway one-carbon metabolism; tetrahydrofolate interconversion. It participates in amino-acid biosynthesis; glycine biosynthesis; glycine from L-serine: step 1/1. Its function is as follows. Catalyzes the reversible interconversion of serine and glycine with tetrahydrofolate (THF) serving as the one-carbon carrier. This reaction serves as the major source of one-carbon groups required for the biosynthesis of purines, thymidylate, methionine, and other important biomolecules. Also exhibits THF-independent aldolase activity toward beta-hydroxyamino acids, producing glycine and aldehydes, via a retro-aldol mechanism. This is Serine hydroxymethyltransferase from Coxiella burnetii (strain CbuG_Q212) (Coxiella burnetii (strain Q212)).